Consider the following 90-residue polypeptide: U-scoloptoxin(15)-Sa3a (90 aa).

The first 18 residues, 1 to 18 (MKMVYLGLFLIITSCVIS), serve as a signal peptide directing secretion.

Belongs to the scoloptoxin-15 family. Post-translationally, contains 3 disulfide bonds. Expressed by the venom gland.

The protein localises to the secreted. The chain is U-scoloptoxin(15)-Sa3a from Scolopendra alternans (Florida Keys giant centipede).